Consider the following 215-residue polypeptide: MTVQKFITYNSVDINGKTLSDEYKLELNVLEKSGNYLIHKDILRHQSSQRQGTISTKTRSEVRGGGRKPWRQKGTGRARAGSSRSPLWKGGGVIFGPKPRKIILKLNKKERKLALQTLLYNKRNNISIIDNLETNLDLPKTKTFYSLCKNCEINLDQKILIIVGEKTIPLKLATRNIKNVELILASNLNTFSLLKAKQILMTPLAVKDIKEIYCG.

The segment covering 48–57 has biased composition (polar residues); sequence SQRQGTISTK. The tract at residues 48-85 is disordered; sequence SQRQGTISTKTRSEVRGGGRKPWRQKGTGRARAGSSRS. The segment covering 65-76 has biased composition (basic residues); sequence GGRKPWRQKGTG.

This sequence belongs to the universal ribosomal protein uL4 family. As to quaternary structure, part of the 50S ribosomal subunit.

It localises to the plastid. The protein localises to the chloroplast. In terms of biological role, probably binds the 23S rRNA. This Trieres chinensis (Marine centric diatom) protein is Large ribosomal subunit protein uL4c (rpl4).